Reading from the N-terminus, the 339-residue chain is Cytochrome c biogenesis protein CcsA (339 aa).

7 helical membrane passes run 6–26, 37–57, 71–91, 97–117, 142–162, 247–267, and 281–299; these read LEHI…LVFW, IGSL…GLLL, LYES…VSEI, WLGI…TVGL, MMIP…ALLI, IISL…VWVN, and TWAL…IRMI.

It belongs to the CcmF/CycK/Ccl1/NrfE/CcsA family. May interact with Ccs1.

It is found in the plastid. The protein resides in the chloroplast thylakoid membrane. In terms of biological role, required during biogenesis of c-type cytochromes (cytochrome c6 and cytochrome f) at the step of heme attachment. This Anthoceros angustus (Hornwort) protein is Cytochrome c biogenesis protein CcsA.